We begin with the raw amino-acid sequence, 332 residues long: GTP 3',8-cyclase (332 aa).

The 212-residue stretch at 9-220 folds into the Radical SAM core domain; it reads GYNRRVDYLR…TQVRERIAER (212 aa). Arg18 contacts GTP. [4Fe-4S] cluster-binding residues include Cys25 and Cys29. Tyr31 contacts S-adenosyl-L-methionine. Position 32 (Cys32) interacts with [4Fe-4S] cluster. Arg67 contacts GTP. Position 71 (Gly71) interacts with S-adenosyl-L-methionine. Thr98 is a binding site for GTP. Ser122 contributes to the S-adenosyl-L-methionine binding site. Lys159 is a binding site for GTP. Residue Met193 coordinates S-adenosyl-L-methionine. [4Fe-4S] cluster is bound by residues Cys258 and Cys261. Residue 263-265 participates in GTP binding; that stretch reads RVR. Cys275 is a [4Fe-4S] cluster binding site.

This sequence belongs to the radical SAM superfamily. MoaA family. As to quaternary structure, monomer and homodimer. [4Fe-4S] cluster serves as cofactor.

It carries out the reaction GTP + AH2 + S-adenosyl-L-methionine = (8S)-3',8-cyclo-7,8-dihydroguanosine 5'-triphosphate + 5'-deoxyadenosine + L-methionine + A + H(+). It participates in cofactor biosynthesis; molybdopterin biosynthesis. In terms of biological role, catalyzes the cyclization of GTP to (8S)-3',8-cyclo-7,8-dihydroguanosine 5'-triphosphate. This Pseudomonas fluorescens (strain Pf0-1) protein is GTP 3',8-cyclase.